Consider the following 514-residue polypeptide: Peptide chain release factor 3 (514 aa).

A tr-type G domain is found at 8-268 (KKRRTFAIIS…TFLEFAPEPH (261 aa)). Residues 17 to 24 (SHPDAGKT), 85 to 89 (DTPGH), and 139 to 142 (NKLD) contribute to the GTP site.

This sequence belongs to the TRAFAC class translation factor GTPase superfamily. Classic translation factor GTPase family. PrfC subfamily.

The protein resides in the cytoplasm. Increases the formation of ribosomal termination complexes and stimulates activities of RF-1 and RF-2. It binds guanine nucleotides and has strong preference for UGA stop codons. It may interact directly with the ribosome. The stimulation of RF-1 and RF-2 is significantly reduced by GTP and GDP, but not by GMP. The protein is Peptide chain release factor 3 of Streptococcus pyogenes serotype M49 (strain NZ131).